We begin with the raw amino-acid sequence, 271 residues long: Glutamate racemase (271 aa).

Substrate is bound by residues D10–S11 and Y42–G43. C73 (proton donor/acceptor) is an active-site residue. Substrate is bound at residue N74–S75. Residue C183 is the Proton donor/acceptor of the active site. T184–H185 contributes to the substrate binding site.

Belongs to the aspartate/glutamate racemases family.

It carries out the reaction L-glutamate = D-glutamate. It functions in the pathway cell wall biogenesis; peptidoglycan biosynthesis. Functionally, provides the (R)-glutamate required for cell wall biosynthesis. The polypeptide is Glutamate racemase (Saccharopolyspora erythraea (strain ATCC 11635 / DSM 40517 / JCM 4748 / NBRC 13426 / NCIMB 8594 / NRRL 2338)).